We begin with the raw amino-acid sequence, 475 residues long: Ribulose bisphosphate carboxylase large chain (475 aa).

Residues 1-2 constitute a propeptide that is removed on maturation; the sequence is MS. N-acetylproline is present on Pro-3. Residue Lys-14 is modified to N6,N6,N6-trimethyllysine. Residues Asn-123 and Thr-173 each contribute to the substrate site. The active-site Proton acceptor is Lys-175. Lys-177 lines the substrate pocket. The Mg(2+) site is built by Lys-201, Asp-203, and Glu-204. Residue Lys-201 is modified to N6-carboxylysine. His-294 serves as the catalytic Proton acceptor. 3 residues coordinate substrate: Arg-295, His-327, and Ser-379.

The protein belongs to the RuBisCO large chain family. Type I subfamily. As to quaternary structure, heterohexadecamer of 8 large chains and 8 small chains; disulfide-linked. The disulfide link is formed within the large subunit homodimers. It depends on Mg(2+) as a cofactor. The disulfide bond which can form in the large chain dimeric partners within the hexadecamer appears to be associated with oxidative stress and protein turnover.

It is found in the plastid. The protein localises to the chloroplast. It catalyses the reaction 2 (2R)-3-phosphoglycerate + 2 H(+) = D-ribulose 1,5-bisphosphate + CO2 + H2O. The catalysed reaction is D-ribulose 1,5-bisphosphate + O2 = 2-phosphoglycolate + (2R)-3-phosphoglycerate + 2 H(+). Its function is as follows. RuBisCO catalyzes two reactions: the carboxylation of D-ribulose 1,5-bisphosphate, the primary event in carbon dioxide fixation, as well as the oxidative fragmentation of the pentose substrate in the photorespiration process. Both reactions occur simultaneously and in competition at the same active site. The polypeptide is Ribulose bisphosphate carboxylase large chain (Angiopteris lygodiifolia (Turnip fern)).